Here is a 285-residue protein sequence, read N- to C-terminus: UPF0354 protein SA1564 (285 aa).

Belongs to the UPF0354 family.

The protein is UPF0354 protein SA1564 of Staphylococcus aureus (strain N315).